The following is a 172-amino-acid chain: Epididymal secretory protein 4 (172 aa).

A signal peptide spans 1–21 (MIAVLLLVFGMTPDYIFPVSA). Cysteines 82 and 167 form a disulfide.

It belongs to the calycin superfamily. Lipocalin family. In terms of tissue distribution, secreted by the epididymal epithelial cells.

The protein localises to the secreted. It is found in the extracellular space. Functionally, could transport small hydrophobic molecules into the epididymal fluid during the sperm maturation. Binds to the head region of spermatozoa and plays a key role in sperm maturation. In Zootoca vivipara (Common lizard), this protein is Epididymal secretory protein 4.